The primary structure comprises 239 residues: tRNA (guanine-N(7)-)-methyltransferase (239 aa).

Residues glutamate 69, glutamate 94, aspartate 121, and aspartate 144 each contribute to the S-adenosyl-L-methionine site. The active site involves aspartate 144. Residue lysine 148 coordinates substrate. Residues 150–155 are interaction with RNA; sequence RHNKRR. Residues aspartate 180 and 217 to 220 contribute to the substrate site; that span reads TKFE.

It belongs to the class I-like SAM-binding methyltransferase superfamily. TrmB family. Monomer.

The enzyme catalyses guanosine(46) in tRNA + S-adenosyl-L-methionine = N(7)-methylguanosine(46) in tRNA + S-adenosyl-L-homocysteine. The protein operates within tRNA modification; N(7)-methylguanine-tRNA biosynthesis. Functionally, catalyzes the formation of N(7)-methylguanine at position 46 (m7G46) in tRNA. This is tRNA (guanine-N(7)-)-methyltransferase from Salmonella typhimurium (strain LT2 / SGSC1412 / ATCC 700720).